The primary structure comprises 257 residues: HTH-type transcriptional activator mta (257 aa).

The HTH merR-type domain occupies 2-71 (KYQVKQVAEI…LDEIKEMLDH (70 aa)). Positions 5-24 (VKQVAEISGVSIRTLHHYDN) form a DNA-binding region, H-T-H motif. The interval 71 to 74 (HPNF) is hinge. An essential for dimerization region spans residues 76–104 (RKAALQSQKEILMKKKQRMDEMIQTIDRT). The stretch at 76–107 (RKAALQSQKEILMKKKQRMDEMIQTIDRTLLS) forms a coiled coil.

Homodimer.

Its subcellular location is the cytoplasm. Its function is as follows. Global transcriptional regulator that activates transcription of bmr and blt by binding directly to their promoter. Also stimulates the expression of the mta gene itself, ydfK and ymfE. The polypeptide is HTH-type transcriptional activator mta (mta) (Bacillus subtilis (strain 168)).